The chain runs to 366 residues: Putative amino-acid transporter MJ1196 (366 aa).

11 helical membrane-spanning segments follow: residues Ile-14 to Gly-34, Ile-37 to Tyr-57, Ile-87 to Phe-107, Phe-111 to Gly-131, Ile-141 to Ile-161, Ile-173 to Leu-193, Gly-205 to Val-225, Phe-247 to Leu-267, Ile-291 to Ala-311, Leu-314 to Phe-334, and Leu-346 to Leu-366.

The protein belongs to the amino acid-polyamine-organocation (APC) superfamily.

The protein resides in the cell membrane. In Methanocaldococcus jannaschii (strain ATCC 43067 / DSM 2661 / JAL-1 / JCM 10045 / NBRC 100440) (Methanococcus jannaschii), this protein is Putative amino-acid transporter MJ1196.